A 188-amino-acid chain; its full sequence is Peptidyl-tRNA hydrolase (188 aa).

Tyrosine 14 is a binding site for tRNA. The active-site Proton acceptor is histidine 19. The tRNA site is built by tyrosine 64, asparagine 66, and asparagine 112.

Belongs to the PTH family. Monomer.

It localises to the cytoplasm. It catalyses the reaction an N-acyl-L-alpha-aminoacyl-tRNA + H2O = an N-acyl-L-amino acid + a tRNA + H(+). Hydrolyzes ribosome-free peptidyl-tRNAs (with 1 or more amino acids incorporated), which drop off the ribosome during protein synthesis, or as a result of ribosome stalling. Its function is as follows. Catalyzes the release of premature peptidyl moieties from peptidyl-tRNA molecules trapped in stalled 50S ribosomal subunits, and thus maintains levels of free tRNAs and 50S ribosomes. The protein is Peptidyl-tRNA hydrolase of Bacillus licheniformis (strain ATCC 14580 / DSM 13 / JCM 2505 / CCUG 7422 / NBRC 12200 / NCIMB 9375 / NCTC 10341 / NRRL NRS-1264 / Gibson 46).